Consider the following 236-residue polypeptide: Predicted GPI-anchored protein 43 (236 aa).

The signal sequence occupies residues 1–24 (MHQRNHHSILLTLLLYLQSIVALA). Residues Asn-192, Asn-195, and Asn-198 are each glycosylated (N-linked (GlcNAc...) asparagine). Gly-208 carries the GPI-anchor amidated glycine lipid modification. The propeptide at 209–236 (SVCLTSSYLNSPIIILCAILTGTLFAMY) is removed in mature form.

Its subcellular location is the cell membrane. This Candida albicans (strain SC5314 / ATCC MYA-2876) (Yeast) protein is Predicted GPI-anchored protein 43 (PGA43).